The sequence spans 426 residues: Glucose-1-phosphate adenylyltransferase (426 aa).

Alpha-D-glucose 1-phosphate-binding positions include Tyr100, Gly165, 180–181, and Ser191; that span reads EK.

Belongs to the bacterial/plant glucose-1-phosphate adenylyltransferase family. Homotetramer.

The catalysed reaction is alpha-D-glucose 1-phosphate + ATP + H(+) = ADP-alpha-D-glucose + diphosphate. Its pathway is glycan biosynthesis; glycogen biosynthesis. Functionally, involved in the biosynthesis of ADP-glucose, a building block required for the elongation reactions to produce glycogen. Catalyzes the reaction between ATP and alpha-D-glucose 1-phosphate (G1P) to produce pyrophosphate and ADP-Glc. This is Glucose-1-phosphate adenylyltransferase from Acetivibrio thermocellus (strain ATCC 27405 / DSM 1237 / JCM 9322 / NBRC 103400 / NCIMB 10682 / NRRL B-4536 / VPI 7372) (Clostridium thermocellum).